Reading from the N-terminus, the 585-residue chain is Protein FAM83D (585 aa).

Residues 1 to 296 (MAARFELLDD…LYAQSEPISS (296 aa)) form a DUF1669 region. Serine 295 carries the post-translational modification Phosphoserine. 2 disordered regions span residues 334-411 (LSST…TSSS) and 425-482 (AASS…SQGS). Residues 337-585 (TPRKSNLGPE…RDIALYPPYQ (249 aa)) form a required for interaction with KIF22 and function in chromosome congression region. Composition is skewed to basic and acidic residues over residues 347 to 360 (EPPKDRAKPKRPDS) and 369 to 383 (DYFHSHKDQLEDSKV). Residues 425–441 (AASSQATVWSKSTTTQT) are compositionally biased toward polar residues. Serine 458 carries the phosphoserine modification. Residues 458 to 482 (SPASKMSVSRSSSVRSSSSVSSQGS) show a composition bias toward low complexity. At threonine 511 the chain carries Phosphothreonine.

The protein belongs to the FAM83 family. In terms of assembly, interacts with FBXW7; promotes FBXW7 degradation. May interact with RAF1. Interacts with KIF22; recruits KIF22 to mitotic spindle microtubules. Interacts (via C-terminus) with DYNLL1. Interacts with HMMR. Directly interacts (via DUF1669) with CSNK1A1 and CSNK1A1L. Phosphorylated during mitosis.

The protein localises to the cytoplasm. Its subcellular location is the cytoskeleton. The protein resides in the spindle. It is found in the spindle pole. Its function is as follows. Through the degradation of FBXW7, may act indirectly on the expression and downstream signaling of MTOR, JUN and MYC. May play also a role in cell proliferation through activation of the ERK1/ERK2 signaling cascade. May also be important for proper chromosome congression and alignment during mitosis through its interaction with KIF22. The chain is Protein FAM83D from Mus musculus (Mouse).